We begin with the raw amino-acid sequence, 447 residues long: Rab GDP dissociation inhibitor alpha (447 aa).

Belongs to the Rab GDI family. As to quaternary structure, interacts with RHOH. Interacts with the non-phosphorylated forms of RAB1A, RAB3A, RAB5A, RAB5B, RAB5C, RAB8A, RAB8B, RAB10, RAB12, RAB35, and RAB43.

Its subcellular location is the cytoplasm. It localises to the golgi apparatus. It is found in the trans-Golgi network. Regulates the GDP/GTP exchange reaction of most Rab proteins by inhibiting the dissociation of GDP from them, and the subsequent binding of GTP to them. Promotes the dissociation of GDP-bound Rab proteins from the membrane and inhibits their activation. Promotes the dissociation of RAB1A, RAB3A, RAB5A and RAB10 from membranes. This chain is Rab GDP dissociation inhibitor alpha (GDI1), found in Pongo pygmaeus (Bornean orangutan).